The sequence spans 163 residues: NADH-quinone oxidoreductase subunit I (163 aa).

2 consecutive 4Fe-4S ferredoxin-type domains span residues 54–84 (LRRY…IESE) and 94–123 (IVYD…ETQI). [4Fe-4S] cluster is bound by residues cysteine 64, cysteine 67, cysteine 70, cysteine 74, cysteine 103, cysteine 106, cysteine 109, and cysteine 113.

It belongs to the complex I 23 kDa subunit family. As to quaternary structure, NDH-1 is composed of 14 different subunits. Subunits NuoA, H, J, K, L, M, N constitute the membrane sector of the complex. Requires [4Fe-4S] cluster as cofactor.

The protein localises to the cell inner membrane. The catalysed reaction is a quinone + NADH + 5 H(+)(in) = a quinol + NAD(+) + 4 H(+)(out). In terms of biological role, NDH-1 shuttles electrons from NADH, via FMN and iron-sulfur (Fe-S) centers, to quinones in the respiratory chain. The immediate electron acceptor for the enzyme in this species is believed to be ubiquinone. Couples the redox reaction to proton translocation (for every two electrons transferred, four hydrogen ions are translocated across the cytoplasmic membrane), and thus conserves the redox energy in a proton gradient. This chain is NADH-quinone oxidoreductase subunit I, found in Ruthia magnifica subsp. Calyptogena magnifica.